The chain runs to 75 residues: Sec-independent protein translocase protein TatA (75 aa).

Residues 1–21 (MGGFSIWHWLIVLVIVLLVFG) traverse the membrane as a helical segment. Residues 41-75 (KGMHDDDKPAGKLGDDSRTAEQAREAQAERDRDAR) form a disordered region.

This sequence belongs to the TatA/E family. As to quaternary structure, the Tat system comprises two distinct complexes: a TatABC complex, containing multiple copies of TatA, TatB and TatC subunits, and a separate TatA complex, containing only TatA subunits. Substrates initially bind to the TatABC complex, which probably triggers association of the separate TatA complex to form the active translocon.

The protein resides in the cell inner membrane. Its function is as follows. Part of the twin-arginine translocation (Tat) system that transports large folded proteins containing a characteristic twin-arginine motif in their signal peptide across membranes. TatA could form the protein-conducting channel of the Tat system. The chain is Sec-independent protein translocase protein TatA from Xanthomonas axonopodis pv. citri (strain 306).